A 295-amino-acid polypeptide reads, in one-letter code: Protoheme IX farnesyltransferase (295 aa).

The next 9 membrane-spanning stretches (helical) occupy residues 30–50, 51–71, 93–115, 119–136, 148–168, 175–195, 219–239, 244–264, and 275–295; these read LVVLTGVTGIIIAPGNIHPLI, AVISTLCIALGSGAAGAINMW, ISRSSALEVGLVLSFISVTIMMI, YISGILLAISIGFYIYVY, IVIGGAAGALPPIIGWTSVTG, LVLFLIIFMWTPPHFWALSLL, IHILVYSILLFPITLLPGLFL, LYEITAIPLGLMFVVQAFQVF, and MFTYSIIYLFILFTCIMLSSF.

It belongs to the UbiA prenyltransferase family. Protoheme IX farnesyltransferase subfamily.

The protein localises to the cell inner membrane. It catalyses the reaction heme b + (2E,6E)-farnesyl diphosphate + H2O = Fe(II)-heme o + diphosphate. It participates in porphyrin-containing compound metabolism; heme O biosynthesis; heme O from protoheme: step 1/1. Its function is as follows. Converts heme B (protoheme IX) to heme O by substitution of the vinyl group on carbon 2 of heme B porphyrin ring with a hydroxyethyl farnesyl side group. The chain is Protoheme IX farnesyltransferase from Ehrlichia ruminantium (strain Gardel).